The primary structure comprises 231 residues: GFP-like fluorescent chromoprotein FP506 (231 aa).

A cross-link (5-imidazolinone (Asn-Gly)) is located at residues 66-68 (NYG). At Tyr-67 the chain carries 2,3-didehydrotyrosine.

This sequence belongs to the GFP family. In terms of processing, contains a chromophore consisting of modified amino acid residues. The chromophore is formed by autocatalytic backbone condensation between Xaa-N and Gly-(N+2), and oxidation of Tyr-(N+1) to didehydrotyrosine. Maturation of the chromophore requires nothing other than molecular oxygen. The precise stereochemistry of the tyrosine has not been determined. In terms of tissue distribution, tentacle and oral disk.

Pigment protein that is yellow-green in color. The sequence is that of GFP-like fluorescent chromoprotein FP506 from Zoanthus sp. (Green polyp).